We begin with the raw amino-acid sequence, 110 residues long: MSARLSIEVCYASAGEQALIAVELPEGATLRQALDASGILRRFPQIDLDTQKVGVFGKLKPLDAVLNDHDRVEIYRPLLVDPKVSRQRRVEKTRKAGSIEGRRWQNKDSR.

Residues 86-110 are disordered; the sequence is RQRRVEKTRKAGSIEGRRWQNKDSR. The segment covering 100–110 has biased composition (basic and acidic residues); the sequence is EGRRWQNKDSR.

The protein belongs to the UPF0125 (RnfH) family.

This chain is Protein RnfH, found in Paraburkholderia xenovorans (strain LB400).